The primary structure comprises 428 residues: Glutamate-1-semialdehyde 2,1-aminomutase (428 aa).

Residue Lys-267 is modified to N6-(pyridoxal phosphate)lysine.

The protein belongs to the class-III pyridoxal-phosphate-dependent aminotransferase family. HemL subfamily. Homodimer. Pyridoxal 5'-phosphate is required as a cofactor.

It is found in the cytoplasm. The catalysed reaction is (S)-4-amino-5-oxopentanoate = 5-aminolevulinate. It functions in the pathway porphyrin-containing compound metabolism; protoporphyrin-IX biosynthesis; 5-aminolevulinate from L-glutamyl-tRNA(Glu): step 2/2. The protein is Glutamate-1-semialdehyde 2,1-aminomutase of Trichlorobacter lovleyi (strain ATCC BAA-1151 / DSM 17278 / SZ) (Geobacter lovleyi).